Consider the following 317-residue polypeptide: Glutathione synthetase (317 aa).

The 186-residue stretch at 126–311 folds into the ATP-grasp domain; the sequence is KFFATQFTQC…IGDKLMDAIA (186 aa). 152–208 contacts ATP; it reads AAEHRDIILKPLDGMGGSSIFRHREGDPNLSVILETLTQHGSQQIMAQRYLPEIKDG. Mg(2+)-binding residues include Glu-282 and Asn-284.

It belongs to the prokaryotic GSH synthase family. Mg(2+) serves as cofactor. Requires Mn(2+) as cofactor.

The catalysed reaction is gamma-L-glutamyl-L-cysteine + glycine + ATP = glutathione + ADP + phosphate + H(+). It functions in the pathway sulfur metabolism; glutathione biosynthesis; glutathione from L-cysteine and L-glutamate: step 2/2. This Pseudomonas aeruginosa (strain ATCC 15692 / DSM 22644 / CIP 104116 / JCM 14847 / LMG 12228 / 1C / PRS 101 / PAO1) protein is Glutathione synthetase.